A 598-amino-acid polypeptide reads, in one-letter code: Fumarate reductase flavoprotein subunit (598 aa).

Residues 12 to 16 (GAGGA), 36 to 38 (ISK), 44 to 52 (SHTVAAEGG), 156 to 158 (HFV), and Asp212 each bind FAD. At His45 the chain carries Tele-8alpha-FAD histidine. Catalysis depends on residues His233 and Arg249. Residues 356–357 (HY), Glu380, and 391–397 (RLGSNSL) each bind FAD. A disordered region spans residues 577–598 (AKRVYGGEATAQDKQNKEKANG).

This sequence belongs to the FAD-dependent oxidoreductase 2 family. FRD/SDH subfamily. In terms of assembly, part of an enzyme complex containing four subunits: a flavoprotein (FrdA), an iron-sulfur protein (FrdB), and two hydrophobic anchor proteins (FrdC and FrdD). Requires FAD as cofactor.

It is found in the cell inner membrane. The enzyme catalyses a quinone + succinate = fumarate + a quinol. It catalyses the reaction a menaquinone + succinate = a menaquinol + fumarate. Functionally, two distinct, membrane-bound, FAD-containing enzymes are responsible for the catalysis of fumarate and succinate interconversion; the fumarate reductase is used in anaerobic growth, and the succinate dehydrogenase is used in aerobic growth. This chain is Fumarate reductase flavoprotein subunit (frdA), found in Proteus vulgaris.